Here is a 201-residue protein sequence, read N- to C-terminus: MKVVAFERQQQGTGASRRLRNAGKTTGIVYGGEAAPQKIELDHNALWHALKKEAFHASILDLEIAGQSQQVLLRDVQYHPFKQLVLHVDFQRVDAKKKLHTKVPLHFLNAEVSPAVKLSSAIVSHVTTEIEVECLPSALPEFLEVDLSKIEAGQSLHAKDIALPNGVALVAHVDAENPVVASATVPAGAVSDAAEGETPAA.

Belongs to the bacterial ribosomal protein bL25 family. CTC subfamily. As to quaternary structure, part of the 50S ribosomal subunit; part of the 5S rRNA/L5/L18/L25 subcomplex. Contacts the 5S rRNA. Binds to the 5S rRNA independently of L5 and L18.

This is one of the proteins that binds to the 5S RNA in the ribosome where it forms part of the central protuberance. The protein is Large ribosomal subunit protein bL25 of Burkholderia vietnamiensis (strain G4 / LMG 22486) (Burkholderia cepacia (strain R1808)).